We begin with the raw amino-acid sequence, 406 residues long: Copper transport protein CTR1 (406 aa).

At 1–152 (MEGMNMGSSM…HHLHANNSGK (152 aa)) the chain is on the cytoplasmic side. 3 consecutive repeat copies span residues 9-27 (SMNM…SSMA), 28-46 (SMSM…SSMS), and 47-65 (SMSM…STMS). The 3 X 19 AA tandem repeats of S-M-X-M-X-A-M-S-S-A-S-K-T-X-X-S-X-M-X stretch occupies residues 9 to 65 (SMNMDAMSSASKTVASSMASMSMDAMSSASKTILSSMSSMSMEAMSSASKTLASTMS). Residues 71–117 (SMGSSSMSGMSMSMSSTPTSSASAQTTSDSSMSGMSGMSSSDNSSSS) form a disordered region. The helical transmembrane segment at 153-173 (AFGIFLLFVVAAFVYKLLLFV) threads the bilayer. Residues 174–250 (SWCLEVHWFK…RAFLVFTSTM (77 aa)) lie on the Extracellular side of the membrane. A helical transmembrane segment spans residues 251 to 271 (IIYMLMLATMSFVLTYVFAVI). The Cytoplasmic portion of the chain corresponds to 272-406 (TGLALSEVFF…LLPAEKFTHN (135 aa)). Positions 304–315 (CPGFGNCQCGRH) match the REP-III motif. A disordered region spans residues 318-406 (PSPDPIAVAD…LLPAEKFTHN (89 aa)). Ser-344 bears the Phosphoserine mark. A Glycyl lysine isopeptide (Lys-Gly) (interchain with G-Cter in ubiquitin) cross-link involves residue Lys-345. The residue at position 349 (Ser-349) is a Phosphoserine. 2 stretches are compositionally biased toward polar residues: residues 349-375 (SENN…NQAN) and 384-395 (SKLQEQSGNMDQ). Residue Thr-356 is modified to Phosphothreonine. Ser-369 bears the Phosphoserine mark.

In terms of assembly, homooligomer. In terms of processing, extensively O-glycosylated.

It is found in the cell membrane. The catalysed reaction is Cu(2+)(in) = Cu(2+)(out). Its function is as follows. High-affinity copper transporter of plasma membrane that mediates copper uptake under low copper conditions. Copper transport through the high affinity system requiring CTRl supplies the iron transport multicopper ferroxidase FET3 with copper, which in turn is required for ferrous iron uptake. The energy for translocation is unlikely to be directly derived from ATP hydrolysis and the exact mechanism driving the transmembrane transport of copper has still to be determined. Binds 4 copper ions via its C-terminal cystein-rich domain and is able to deliver Cu(I) directly to both the chaperone ATX1 and to an N-terminal domain of the CCC2 protein. Also able to mediate the uptake of the anticancer drug cisplatin. This Saccharomyces cerevisiae (strain ATCC 204508 / S288c) (Baker's yeast) protein is Copper transport protein CTR1.